Reading from the N-terminus, the 490-residue chain is GTPase Der (490 aa).

EngA-type G domains are found at residues 3 to 166 and 196 to 369; these read PVIA…PRDD and IKIA…KSAV. Residues 9–16, 56–60, and 118–121 contribute to the GTP site; these read GRPNVGKS, DTGGI, and NKVD. Positions 162 to 189 are disordered; sequence FPRDDDEPAEGEEEEVVAEGEEAKRIPG. Residues 164-181 are compositionally biased toward acidic residues; it reads RDDDEPAEGEEEEVVAEG. GTP contacts are provided by residues 202–209, 249–253, and 314–317; these read GRPNVGKS, DTAGV, and NKWD. One can recognise a KH-like domain in the interval 370-454; that stretch reads TRWPTSRLTQ…PIRIEFKGGE (85 aa). Positions 453–490 are disordered; that stretch reads GENPYEGNKNTLTDRQVNKKRRLMSHNKKASKKRRDKK. Positions 470 to 490 are enriched in basic residues; sequence NKKRRLMSHNKKASKKRRDKK.

It belongs to the TRAFAC class TrmE-Era-EngA-EngB-Septin-like GTPase superfamily. EngA (Der) GTPase family. Associates with the 50S ribosomal subunit.

GTPase that plays an essential role in the late steps of ribosome biogenesis. The chain is GTPase Der from Pseudomonas fluorescens (strain Pf0-1).